The chain runs to 73 residues: uncharacterized protein (73 aa).

A disordered region spans residues 1–32 (MFLSSAVRKDSNGVRHLPSVQRWTPGSPPTRA).

This is an uncharacterized protein from Frog virus 3 (isolate Goorha) (FV-3).